A 333-amino-acid chain; its full sequence is DNA-directed RNA polymerase subunit alpha (333 aa).

An alpha N-terminal domain (alpha-NTD) region spans residues 1 to 234 (MQSSVNEFLT…QQLAAFVDLK (234 aa)). The alpha C-terminal domain (alpha-CTD) stretch occupies residues 248 to 333 (IDPILLRPVD…SLKKDDKATA (86 aa)).

The protein belongs to the RNA polymerase alpha chain family. Homodimer. The RNAP catalytic core consists of 2 alpha, 1 beta, 1 beta' and 1 omega subunit. When a sigma factor is associated with the core the holoenzyme is formed, which can initiate transcription.

It catalyses the reaction RNA(n) + a ribonucleoside 5'-triphosphate = RNA(n+1) + diphosphate. Its function is as follows. DNA-dependent RNA polymerase catalyzes the transcription of DNA into RNA using the four ribonucleoside triphosphates as substrates. The polypeptide is DNA-directed RNA polymerase subunit alpha (Stutzerimonas stutzeri (strain A1501) (Pseudomonas stutzeri)).